Reading from the N-terminus, the 267-residue chain is tRNA pseudouridine synthase A (267 aa).

Asp-55 (nucleophile) is an active-site residue. Residue Tyr-111 participates in substrate binding.

The protein belongs to the tRNA pseudouridine synthase TruA family.

It catalyses the reaction uridine(38/39/40) in tRNA = pseudouridine(38/39/40) in tRNA. Formation of pseudouridine at positions 38, 39 and 40 in the anticodon stem and loop of transfer RNAs. The polypeptide is tRNA pseudouridine synthase A (Thermococcus gammatolerans (strain DSM 15229 / JCM 11827 / EJ3)).